A 264-amino-acid chain; its full sequence is Putative hydroxypyruvate isomerase (264 aa).

Residues Glu-145 and Glu-243 each act as proton donor/acceptor in the active site.

Belongs to the hyi family.

It catalyses the reaction 3-hydroxypyruvate = 2-hydroxy-3-oxopropanoate. In terms of biological role, catalyzes the reversible isomerization between hydroxypyruvate and 2-hydroxy-3-oxopropanoate (also termed tartronate semialdehyde). This chain is Putative hydroxypyruvate isomerase (Gip), found in Drosophila melanogaster (Fruit fly).